The primary structure comprises 363 residues: Phosphoribosylformylglycinamidine cyclo-ligase (363 aa).

The protein belongs to the AIR synthase family.

The protein resides in the cytoplasm. The catalysed reaction is 2-formamido-N(1)-(5-O-phospho-beta-D-ribosyl)acetamidine + ATP = 5-amino-1-(5-phospho-beta-D-ribosyl)imidazole + ADP + phosphate + H(+). Its pathway is purine metabolism; IMP biosynthesis via de novo pathway; 5-amino-1-(5-phospho-D-ribosyl)imidazole from N(2)-formyl-N(1)-(5-phospho-D-ribosyl)glycinamide: step 2/2. This Brucella anthropi (strain ATCC 49188 / DSM 6882 / CCUG 24695 / JCM 21032 / LMG 3331 / NBRC 15819 / NCTC 12168 / Alc 37) (Ochrobactrum anthropi) protein is Phosphoribosylformylglycinamidine cyclo-ligase.